The primary structure comprises 178 residues: Non-specific lipid transfer protein-like 1 (178 aa).

The N-terminal stretch at 1–26 (MAVAARAAAVACLLVVGLAAVAGVDG) is a signal peptide. Disulfide bonds link cysteine 50-cysteine 68 and cysteine 69-cysteine 110. N-linked (GlcNAc...) asparagine glycosylation occurs at asparagine 99. The GPI-anchor amidated alanine moiety is linked to residue alanine 149. A propeptide spans 150–178 (AARSPMASTTAVLVVAAAVAAPLLAFFHF) (removed in mature form).

The protein belongs to the plant LTP family. O-glycosylated on hydroxyprolines; noncontiguous hydroxylproline residues are glycosylated with arabinogalactan. Expressed in roots, stems, leaves, flowers and seeds.

It is found in the vacuole. The protein resides in the aleurone grain membrane. This is Non-specific lipid transfer protein-like 1 (LTPL1) from Oryza sativa subsp. japonica (Rice).